The sequence spans 160 residues: uncharacterized protein (160 aa).

This is an uncharacterized protein from Galliformes (FAdV-1).